The sequence spans 201 residues: Large ribosomal subunit protein uL4 (201 aa).

The segment at Thr-43 to Arg-69 is disordered.

It belongs to the universal ribosomal protein uL4 family. As to quaternary structure, part of the 50S ribosomal subunit.

One of the primary rRNA binding proteins, this protein initially binds near the 5'-end of the 23S rRNA. It is important during the early stages of 50S assembly. It makes multiple contacts with different domains of the 23S rRNA in the assembled 50S subunit and ribosome. Functionally, forms part of the polypeptide exit tunnel. The protein is Large ribosomal subunit protein uL4 of Thioalkalivibrio sulfidiphilus (strain HL-EbGR7).